We begin with the raw amino-acid sequence, 277 residues long: Putative phosphoenolpyruvate synthase regulatory protein (277 aa).

Position 157–164 (157–164) interacts with ADP; sequence GVSRSGKT.

The protein belongs to the pyruvate, phosphate/water dikinase regulatory protein family. PSRP subfamily.

The catalysed reaction is [pyruvate, water dikinase] + ADP = [pyruvate, water dikinase]-phosphate + AMP + H(+). The enzyme catalyses [pyruvate, water dikinase]-phosphate + phosphate + H(+) = [pyruvate, water dikinase] + diphosphate. Functionally, bifunctional serine/threonine kinase and phosphorylase involved in the regulation of the phosphoenolpyruvate synthase (PEPS) by catalyzing its phosphorylation/dephosphorylation. The sequence is that of Putative phosphoenolpyruvate synthase regulatory protein from Vibrio cholerae serotype O1 (strain ATCC 39541 / Classical Ogawa 395 / O395).